Reading from the N-terminus, the 240-residue chain is Pro-opiomelanocortin B (240 aa).

Positions 1–36 (MFGTFLQNQSVRLNMVCAPWLLAVVVVCVCNPGVEG) are cleaved as a signal peptide. Residue Q37 is modified to Pyrrolidone carboxylic acid. A propeptide is located at residue H111. N-acetylserine; in Corticotropin is present on S112. I124 carries the isoleucine amide modification.

The protein belongs to the POMC family. Post-translationally, specific enzymatic cleavages at paired basic residues yield the different active peptides. Acetylation of beta-endorphin occurs in a tissue-specific manner. Pituitary and hypothalamus of adult diploid animals.

It is found in the secreted. Functionally, stimulates the adrenal glands to release cortisol. Its function is as follows. Melanocyte-stimulating hormone alpha: Anorexigenic peptide. Increases the pigmentation of skin by increasing melanin production in melanocytes. In terms of biological role, melanocyte-stimulating hormone beta: Increases the pigmentation of skin by increasing melanin production in melanocytes. Beta-endorphin: Endogenous orexigenic opiate. Functionally, endogenous opiate. This chain is Pro-opiomelanocortin B (pomcb), found in Oncorhynchus mykiss (Rainbow trout).